A 65-amino-acid polypeptide reads, in one-letter code: Cecropin (65 aa).

Positions 1–23 (MNFVKVLFFISACILIMLSAVSG) are cleaved as a signal peptide.

It belongs to the cecropin family.

The protein resides in the secreted. Its function is as follows. Has antibacterial activity. This Galleria mellonella (Greater wax moth) protein is Cecropin (LOC113514368).